The chain runs to 265 residues: Thiazole synthase (265 aa).

The active-site Schiff-base intermediate with DXP is Lys-103. 1-deoxy-D-xylulose 5-phosphate-binding positions include Gly-164, 190–191 (AG), and 212–213 (NT).

It belongs to the ThiG family. In terms of assembly, homotetramer. Forms heterodimers with either ThiH or ThiS.

The protein resides in the cytoplasm. The catalysed reaction is [ThiS sulfur-carrier protein]-C-terminal-Gly-aminoethanethioate + 2-iminoacetate + 1-deoxy-D-xylulose 5-phosphate = [ThiS sulfur-carrier protein]-C-terminal Gly-Gly + 2-[(2R,5Z)-2-carboxy-4-methylthiazol-5(2H)-ylidene]ethyl phosphate + 2 H2O + H(+). It participates in cofactor biosynthesis; thiamine diphosphate biosynthesis. In terms of biological role, catalyzes the rearrangement of 1-deoxy-D-xylulose 5-phosphate (DXP) to produce the thiazole phosphate moiety of thiamine. Sulfur is provided by the thiocarboxylate moiety of the carrier protein ThiS. In vitro, sulfur can be provided by H(2)S. The sequence is that of Thiazole synthase from Bordetella avium (strain 197N).